Here is a 463-residue protein sequence, read N- to C-terminus: Immune-associated nucleotide-binding protein 10 (463 aa).

The AIG1-type G domain maps to 3–211 (EPIKNIVLVG…YTYQLHRKIK (209 aa)). The segment at 12-19 (GRTGNGKS) is G1. Residues 12 to 20 (GRTGNGKSS) and Ser-33 contribute to the GTP site. Residues 39–43 (GVTMI) form a G2 region. A G3 region spans residues 61-64 (DTPG). The segment at 131–134 (TGGD) is G4. The G5 stretch occupies residues 170 to 172 (DNK). Asn-171 provides a ligand contact to GTP. The stretch at 173-308 (SKDEKKKVEQ…KQLIAQANRM (136 aa)) forms a coiled coil.

It belongs to the TRAFAC class TrmE-Era-EngA-EngB-Septin-like GTPase superfamily. AIG1/Toc34/Toc159-like paraseptin GTPase family. IAN subfamily. As to expression, expressed in radicles of the germinating seeds.

The sequence is that of Immune-associated nucleotide-binding protein 10 from Arabidopsis thaliana (Mouse-ear cress).